The primary structure comprises 3068 residues: Highly reducing polyketide synthase 17 (3068 aa).

A Ketosynthase family 3 (KS3) domain is found at 100–526 (IEPIAIVGAS…GTNAHAIMER (427 aa)). Active-site for beta-ketoacyl synthase activity residues include Cys-274, His-410, and His-449. The tract at residues 627 to 938 (YVFTGQGAQW…LAGPIRQCLA (312 aa)) is malonyl-CoA:ACP transacylase (MAT) domain. The active-site For malonyltransferase activity is the Ser-721. The N-terminal hotdog fold stretch occupies residues 1027–1160 (HHLLGVRMTE…GVVEGVMTLD (134 aa)). The segment at 1027–1311 (HHLLGVRMTE…RASNIDMTIV (285 aa)) is dehydratase (DH) domain. In terms of domain architecture, PKS/mFAS DH spans 1027–1334 (HHLLGVRMTE…SRSLAAHVDG (308 aa)). His-1059 (proton acceptor; for dehydratase activity) is an active-site residue. The segment at 1179-1334 (NRTMVIPEEL…SRSLAAHVDG (156 aa)) is C-terminal hotdog fold. Asp-1247 (proton donor; for dehydratase activity) is an active-site residue. The enoylreductase (ER) domain stretch occupies residues 1735-2037 (LGPVQSSKGD…LVRQGGKVIL (303 aa)). A catalytic ketoreductase (KR) domain region spans residues 2062-2240 (AAYVVAGGMG…FLSMNIGWIE (179 aa)). A Carrier domain is found at 2345–2423 (TIIDFISSAI…DLAEKVASRS (79 aa)). Ser-2383 is modified (O-(pantetheine 4'-phosphoryl)serine). Positions 2831 to 3062 (FDVASLGLRS…SCMITSLLED (232 aa)) are choline/carnitine acyltransferase (cAT) domain.

The protein operates within secondary metabolite biosynthesis. In terms of biological role, highly reducing polyketide synthase; part of the gene cluster that mediates the biosynthesis of (2Z,4E,6E,10E)-9-hydroxydodeca-2,4,6,10-tetraenoic acid (BAA), (2E,4E,6E,10E)-9-hydroxydodeca-2,4,6,10-tetraenoic acid (BAB), and (2Z,4E,6E)-octa-2,4,6-trienedioic acid (PBA). The highly reducing polyketide synthase Ba17a is sufficent to produce PBA and BAA. The still to be characterized protein Ba17b leads to an increased production of BAA as well as to the production of the new compound BAB. BAA does not possess insecticidal activity against G.mellonella larvae, however, both BAA and BAB increase the growth of Candida albicans and BAA can mitigate the fungicidal effects of fluconazole over C.albicans, suggesting that generalist pathogens such as M.anisopliae, can potentially manipulate the yeast microbiota found in arthropods (and anywhere else) by the activity of compounds as BAA and BAB. This chain is Highly reducing polyketide synthase 17, found in Metarhizium anisopliae (Entomophthora anisopliae).